Reading from the N-terminus, the 476-residue chain is MAPAGVSLRATILCLLAWAGLAAGDRVYIHPFHLVIHNESTCEQLAKANAGKPKDPTFIPAPIQAKTSPVDEKALQDQLVLVAAKLDTEDKLRAAMVGMLANFLGFRIYGMHSELWGVVHGATVLSPTAVFGTLASLYLGALDHTADRLQAILGVPWKDKNCTSRLDAHKVLSALQAVQGLLVAQGRADSQAQLLLSTVVGVFTAPGLHLKQPFVQGLALYTPVVLPRSLDFTELDVAAEKIDRFMQAVTGWKTGCSLMGASVDSTLAFNTYVHFQGKMKGFSLLAEPQEFWVDNSTSVSVPMLSGMGTFQHWSDIQDNFSVTQVPFTESACLLLIQPHYASDLDKVEGLTFQQNSLNWMKKLSPRTIHLTMPQLVLQGSYDLQDLLAQAELPAILHTELNLQKLSNDRIRVGEVLNSIFFELEADEREPTESTQQLNKPEVLEVTLNRPFLFAVYDQSATALHFLGRVANPLSTA.

An N-terminal signal peptide occupies residues 1-24 (MAPAGVSLRATILCLLAWAGLAAG). A Beta-decarboxylated aspartate; in form angiotensin-A modification is found at Asp25. N-linked (GlcNAc...) asparagine glycans are attached at residues Asn38, Asn161, Asn295, and Asn319. Cys42 and Cys162 form a disulfide bridge.

Belongs to the serpin family. As to quaternary structure, during pregnancy, exists as a disulfide-linked 2:2 heterotetramer with the proform of PRG2 and as a complex (probably a 2:2:2 heterohexamer) with pro-PRG2 and C3dg. Beta-decarboxylation of Asp-25 in angiotensin-2, by mononuclear leukocytes produces alanine. The resulting peptide form, angiotensin-A, has the same affinity for the AT1 receptor as angiotensin-2, but a higher affinity for the AT2 receptor. Post-translationally, in response to low blood pressure, the enzyme renin/REN cleaves angiotensinogen to produce angiotensin-1. Angiotensin-1 is a substrate of ACE (angiotensin converting enzyme) that removes a dipeptide to yield the physiologically active peptide angiotensin-2. Angiotensin-1 and angiotensin-2 can be further processed to generate angiotensin-3, angiotensin-4. Angiotensin 1-9 is cleaved from angiotensin-1 by ACE2 and can be further processed by ACE to produce angiotensin 1-7, angiotensin 1-5 and angiotensin 1-4. Angiotensin 1-7 has also been proposed to be cleaved from angiotensin-2 by ACE2 or from angiotensin-1 by MME (neprilysin). In terms of processing, the disulfide bond is labile. Angiotensinogen is present in the circulation in a near 40:60 ratio with the oxidized disulfide-bonded form, which preferentially interacts with receptor-bound renin. As to expression, expressed by the liver and secreted in plasma.

It localises to the secreted. Essential component of the renin-angiotensin system (RAS), a potent regulator of blood pressure, body fluid and electrolyte homeostasis. Functionally, acts directly on vascular smooth muscle as a potent vasoconstrictor, affects cardiac contractility and heart rate through its action on the sympathetic nervous system, and alters renal sodium and water absorption through its ability to stimulate the zona glomerulosa cells of the adrenal cortex to synthesize and secrete aldosterone. Acts by binding to angiotensin receptors AGTR1 and AGTR2. Also binds the DEAR/FBXW7-AS1 receptor. In terms of biological role, stimulates aldosterone release. Its function is as follows. Is a ligand for the G-protein coupled receptor MAS1. Has vasodilator and antidiuretic effects. Has an antithrombotic effect that involves MAS1-mediated release of nitric oxide from platelets. The polypeptide is Angiotensinogen (Homo sapiens (Human)).